The chain runs to 90 residues: MTDDQTRRSAGASRRRFGARRKVCAFCADKIRVVDYKDVKRLQRCMSERGKILPRRRTGVCARHQRSLTVAIKRARHMALLPFVAAHMHS.

This sequence belongs to the bacterial ribosomal protein bS18 family. In terms of assembly, part of the 30S ribosomal subunit. Forms a tight heterodimer with protein bS6.

Its function is as follows. Binds as a heterodimer with protein bS6 to the central domain of the 16S rRNA, where it helps stabilize the platform of the 30S subunit. The polypeptide is Small ribosomal subunit protein bS18A (Roseiflexus castenholzii (strain DSM 13941 / HLO8)).